We begin with the raw amino-acid sequence, 802 residues long: Putative transcriptional regulator cudA (802 aa).

Disordered regions lie at residues 1–148, 154–173, 381–446, and 636–658; these read MNQS…PSAI, ISNN…NLLL, NNIN…NNEN, and QPQQ…QQGQ. Positions 25 to 63 are enriched in low complexity; the sequence is NNNNNGNNGMMMNQQQMQQHVVPHLHHLQQQQQQPQQQQ. Polar residues predominate over residues 69 to 88; that stretch reads DYSNSPNGTTNGSTMSPNCI. The segment covering 89–128 has biased composition (low complexity); it reads NTNNNNNNNNNNNNNSNNNNNNNNNASNNLTSNKSSSTNT. Residues 129 to 142 show a composition bias toward polar residues; sequence PQIGQLQASPANLT. The segment covering 381 to 445 has biased composition (low complexity); that stretch reads NNINNNNNIN…CNNNNNNNNE (65 aa).

Expressed in the prestalk cells that constitute the slug tip (pstA cells) and in prespore cells (at protein level). Not expressed in the band of prestalk cells that lies behind the slug tip (pstO cells). Highly expressed in pstO derived papilla cells during culmination.

Its subcellular location is the nucleus. It is found in the nucleoplasm. Its function is as follows. Essential for normal culmination. May function as a transcriptional regulator. The polypeptide is Putative transcriptional regulator cudA (cudA) (Dictyostelium discoideum (Social amoeba)).